Consider the following 303-residue polypeptide: Putative S-adenosyl-L-methionine-dependent methyltransferase MAB_0213c (303 aa).

S-adenosyl-L-methionine is bound by residues Asp-126 and 155–156 (DL).

Belongs to the UPF0677 family.

Exhibits S-adenosyl-L-methionine-dependent methyltransferase activity. The protein is Putative S-adenosyl-L-methionine-dependent methyltransferase MAB_0213c of Mycobacteroides abscessus (strain ATCC 19977 / DSM 44196 / CCUG 20993 / CIP 104536 / JCM 13569 / NCTC 13031 / TMC 1543 / L948) (Mycobacterium abscessus).